Consider the following 284-residue polypeptide: 4-hydroxybenzoate octaprenyltransferase (284 aa).

A run of 8 helical transmembrane segments spans residues 16–36 (PIGI…ASDG), 40–60 (WTLL…GCAI), 91–111 (LLVA…LNTL), 132–152 (FFAI…PMGF), 157–177 (NTVP…AVAY), 206–226 (VAAV…VGWQ), 231–251 (TWFA…YTLI), and 259–279 (CFAA…GVVL).

This sequence belongs to the UbiA prenyltransferase family. Mg(2+) serves as cofactor.

It is found in the cell inner membrane. It catalyses the reaction all-trans-octaprenyl diphosphate + 4-hydroxybenzoate = 4-hydroxy-3-(all-trans-octaprenyl)benzoate + diphosphate. Its pathway is cofactor biosynthesis; ubiquinone biosynthesis. Catalyzes the prenylation of para-hydroxybenzoate (PHB) with an all-trans polyprenyl group. Mediates the second step in the final reaction sequence of ubiquinone-8 (UQ-8) biosynthesis, which is the condensation of the polyisoprenoid side chain with PHB, generating the first membrane-bound Q intermediate 3-octaprenyl-4-hydroxybenzoate. This Herminiimonas arsenicoxydans protein is 4-hydroxybenzoate octaprenyltransferase.